The sequence spans 448 residues: Tubulin beta-1 chain (448 aa).

8 residues coordinate GTP: glutamine 11, glutamate 72, serine 141, glycine 145, threonine 146, glycine 147, asparagine 207, and asparagine 229. Glutamate 72 lines the Mg(2+) pocket. The segment at glutamine 424–glutamate 448 is disordered. Residues glycine 430–glutamate 448 are compositionally biased toward acidic residues.

It belongs to the tubulin family. As to quaternary structure, dimer of alpha and beta chains. A typical microtubule is a hollow water-filled tube with an outer diameter of 25 nm and an inner diameter of 15 nM. Alpha-beta heterodimers associate head-to-tail to form protofilaments running lengthwise along the microtubule wall with the beta-tubulin subunit facing the microtubule plus end conferring a structural polarity. Microtubules usually have 13 protofilaments but different protofilament numbers can be found in some organisms and specialized cells. Mg(2+) serves as cofactor.

It localises to the cytoplasm. The protein resides in the cytoskeleton. Functionally, tubulin is the major constituent of microtubules, a cylinder consisting of laterally associated linear protofilaments composed of alpha- and beta-tubulin heterodimers. Microtubules grow by the addition of GTP-tubulin dimers to the microtubule end, where a stabilizing cap forms. Below the cap, tubulin dimers are in GDP-bound state, owing to GTPase activity of alpha-tubulin. This chain is Tubulin beta-1 chain (TUB1), found in Colletotrichum gloeosporioides (Anthracnose fungus).